A 153-amino-acid polypeptide reads, in one-letter code: uncharacterized protein (153 aa).

Transmembrane regions (helical) follow at residues 16–36 (ILAC…ILEI) and 97–117 (ALTT…CIIC).

It is found in the membrane. This is an uncharacterized protein from Human herpesvirus 6A (strain Uganda-1102) (HHV-6 variant A).